Reading from the N-terminus, the 149-residue chain is MTVFKEILGNITDIENVESYQIENIHLTSDDVLKRVIIISSDQNVEYGIRLEEDKKLRDGDILYKDDYKLVVIRLELSDVLIITARTIGEMAQIAHNLGNRHMPAQFTETQMIVPYDYLVEQYLQDNKALYEREKIKLKEAFRHCSDAK.

This sequence belongs to the UreE family.

It localises to the cytoplasm. Its function is as follows. Involved in urease metallocenter assembly. Binds nickel. Probably functions as a nickel donor during metallocenter assembly. In Ureaplasma urealyticum serovar 10 (strain ATCC 33699 / Western), this protein is Urease accessory protein UreE.